The chain runs to 408 residues: Sprouty-related, EVH1 domain-containing protein 3 (408 aa).

In terms of domain architecture, WH1 spans 1–113; it reads MVRVRAVVMA…KSLLAALAAL (113 aa). The disordered stretch occupies residues 118–226; the sequence is LTPSSSSSSS…YEDYRRSGPP (109 aa). The segment covering 120–130 has biased composition (low complexity); the sequence is PSSSSSSSSPS. Residues 192-242 form the KBD domain; that stretch reads LPFTGIPEPSESLAGAGSQGWGSRGYEDYRRSGPPPPPLALSTCVVRFAKT. Arg-238 carries the post-translational modification Asymmetric dimethylarginine. Position 246 is an omega-N-methylarginine (Arg-246). The tract at residues 256-286 is disordered; sequence LPAPLTEAAPPAPPARPPPGPGPTPAPAKAS. Positions 265 to 281 are enriched in pro residues; the sequence is PPAPPARPPPGPGPTPA. The SPR domain maps to 294 to 405; sequence RCVHCRALFR…CAGCGGRHEE (112 aa).

Interacts with palmitoyltransferase ZDHHC17/HIP14; the interaction leads to palmitoylation of SPRED3. Phosphorylated on tyrosine. Post-translationally, palmitoylated by ZDHHC17/HIP14. In terms of processing, ubiquitinated. As to expression, brain specific.

It is found in the cell membrane. Tyrosine kinase substrate that inhibits growth-factor-mediated activation of MAP kinase. Inhibits fibroblast growth factor (FGF)-induced retinal lens fiber differentiation, probably by inhibiting FGF-mediated phosphorylation of ERK1/2. Inhibits TGFB-induced epithelial-to-mesenchymal transition in lens epithelial cells. The sequence is that of Sprouty-related, EVH1 domain-containing protein 3 (Spred3) from Mus musculus (Mouse).